A 413-amino-acid chain; its full sequence is Glucose-1-phosphate adenylyltransferase (413 aa).

Alpha-D-glucose 1-phosphate contacts are provided by residues Tyr-102, Gly-167, 182-183, and Ser-200; that span reads EK.

Belongs to the bacterial/plant glucose-1-phosphate adenylyltransferase family. Homotetramer.

It catalyses the reaction alpha-D-glucose 1-phosphate + ATP + H(+) = ADP-alpha-D-glucose + diphosphate. Its pathway is glycan biosynthesis; glycogen biosynthesis. Its function is as follows. Involved in the biosynthesis of ADP-glucose, a building block required for the elongation reactions to produce glycogen. Catalyzes the reaction between ATP and alpha-D-glucose 1-phosphate (G1P) to produce pyrophosphate and ADP-Glc. The chain is Glucose-1-phosphate adenylyltransferase from Deinococcus deserti (strain DSM 17065 / CIP 109153 / LMG 22923 / VCD115).